Reading from the N-terminus, the 268-residue chain is Putative esterase/lipase 2 (268 aa).

His-29 is a catalytic residue. Ser-98 acts as the Charge relay system in catalysis.

It belongs to the lipase/esterase LIP3/BchO family.

The polypeptide is Putative esterase/lipase 2 (Mycoplasma genitalium (strain ATCC 33530 / DSM 19775 / NCTC 10195 / G37) (Mycoplasmoides genitalium)).